We begin with the raw amino-acid sequence, 131 residues long: Type-5 thionin (131 aa).

The first 29 residues, 1–29, serve as a signal peptide directing secretion; it reads MGGGQKGLESAIVCLLVLGLVLEQVQVEG. Residues 67 to 131 constitute a propeptide, acidic domain; sequence LASVRSSDEP…GDTLLASLDD (65 aa).

This sequence belongs to the plant thionin (TC 1.C.44) family. In terms of processing, is disulfide-linked. As to expression, developing endosperm.

It localises to the secreted. Thionins are small plant proteins which are toxic to animal cells. They seem to exert their toxic effect at the level of the cell membrane. Their precise function is not known. The polypeptide is Type-5 thionin (TTHV) (Triticum aestivum (Wheat)).